The sequence spans 566 residues: Proline--tRNA ligase (566 aa).

It belongs to the class-II aminoacyl-tRNA synthetase family. ProS type 1 subfamily. In terms of assembly, homodimer.

It localises to the cytoplasm. It carries out the reaction tRNA(Pro) + L-proline + ATP = L-prolyl-tRNA(Pro) + AMP + diphosphate. Its function is as follows. Catalyzes the attachment of proline to tRNA(Pro) in a two-step reaction: proline is first activated by ATP to form Pro-AMP and then transferred to the acceptor end of tRNA(Pro). As ProRS can inadvertently accommodate and process non-cognate amino acids such as alanine and cysteine, to avoid such errors it has two additional distinct editing activities against alanine. One activity is designated as 'pretransfer' editing and involves the tRNA(Pro)-independent hydrolysis of activated Ala-AMP. The other activity is designated 'posttransfer' editing and involves deacylation of mischarged Ala-tRNA(Pro). The misacylated Cys-tRNA(Pro) is not edited by ProRS. This is Proline--tRNA ligase from Bacillus cereus (strain G9842).